Here is a 250-residue protein sequence, read N- to C-terminus: Probable transcriptional regulatory protein SAV_6832 (250 aa).

The protein belongs to the TACO1 family.

The protein resides in the cytoplasm. The polypeptide is Probable transcriptional regulatory protein SAV_6832 (Streptomyces avermitilis (strain ATCC 31267 / DSM 46492 / JCM 5070 / NBRC 14893 / NCIMB 12804 / NRRL 8165 / MA-4680)).